Reading from the N-terminus, the 308-residue chain is tRNA dimethylallyltransferase (308 aa).

14 to 21 (GPTASGKT) contacts ATP. 16-21 (TASGKT) serves as a coordination point for substrate. Interaction with substrate tRNA stretches follow at residues 39–42 (DSAL), 163–167 (QRLAR), and 244–249 (RCVGYR).

This sequence belongs to the IPP transferase family. As to quaternary structure, monomer. It depends on Mg(2+) as a cofactor.

It carries out the reaction adenosine(37) in tRNA + dimethylallyl diphosphate = N(6)-dimethylallyladenosine(37) in tRNA + diphosphate. Catalyzes the transfer of a dimethylallyl group onto the adenine at position 37 in tRNAs that read codons beginning with uridine, leading to the formation of N6-(dimethylallyl)adenosine (i(6)A). This chain is tRNA dimethylallyltransferase, found in Shewanella piezotolerans (strain WP3 / JCM 13877).